We begin with the raw amino-acid sequence, 693 residues long: Polyribonucleotide nucleotidyltransferase (693 aa).

Mg(2+) contacts are provided by Asp-489 and Asp-495. The KH domain maps to 556 to 615; that stretch reads PQIHVMNINPAKIKDVVGRGGATVKGIVEKTGAQIDTSDSGEVKVFAKDKKSMDMAVAMI. Residues 625–693 form the S1 motif domain; that stretch reads GQVYKGKIVK…GRVKLSLVAR (69 aa).

This sequence belongs to the polyribonucleotide nucleotidyltransferase family. As to quaternary structure, component of the RNA degradosome, which is a multiprotein complex involved in RNA processing and mRNA degradation. Requires Mg(2+) as cofactor.

It is found in the cytoplasm. It catalyses the reaction RNA(n+1) + phosphate = RNA(n) + a ribonucleoside 5'-diphosphate. In terms of biological role, involved in mRNA degradation. Catalyzes the phosphorolysis of single-stranded polyribonucleotides processively in the 3'- to 5'-direction. The polypeptide is Polyribonucleotide nucleotidyltransferase (Francisella tularensis subsp. tularensis (strain WY96-3418)).